Consider the following 496-residue polypeptide: Glutamate--tRNA ligase 2 (496 aa).

The short motif at Pro-13–Gly-23 is the 'HIGH' region element. The 'KMSKS' region signature appears at Lys-255–Arg-259. Lys-258 contacts ATP.

This sequence belongs to the class-I aminoacyl-tRNA synthetase family. Glutamate--tRNA ligase type 1 subfamily. Monomer.

Its subcellular location is the cytoplasm. The enzyme catalyses tRNA(Glu) + L-glutamate + ATP = L-glutamyl-tRNA(Glu) + AMP + diphosphate. In terms of biological role, catalyzes the attachment of glutamate to tRNA(Glu) in a two-step reaction: glutamate is first activated by ATP to form Glu-AMP and then transferred to the acceptor end of tRNA(Glu). This is Glutamate--tRNA ligase 2 from Rubrobacter xylanophilus (strain DSM 9941 / JCM 11954 / NBRC 16129 / PRD-1).